Here is a 363-residue protein sequence, read N- to C-terminus: MLYDLIQHHGSAHVTVLNLFRYITFRAGAACLTALAISLLLGNPLIAQLRRIQREGQPIRALGPERHILEKAGTPTMGGVLILAALFGSTLLWADLTDGYVWAVLLTTLSFGAVGFADDYLKLSRRNTAGVSKRMRLGCEFAASLVGGYWMQSLMPADLANHLAFPFLKEWLLPLGFAFPLFAMITITGFGNAVNFTDGLDGLAIVPVIIAALVFGLISYLVGNHVFADYLQLHAVPGTGELCVFCSALVGAGLGFLWFNAPPAAVFMGDTGSLSLGGALGAIAVAVKHELVLCIVGGLFVVETLSVIIQVFWFRRTGRRVFLMAPLHHHFEKKGWQEPKIVIRFWIVSIVLGLCGLATLKLR.

Helical transmembrane passes span 27-47 (AGAA…PLIA), 76-96 (TMGG…WADL), 97-117 (TDGY…VGFA), 137-157 (LGCE…LMPA), 171-191 (WLLP…TGFG), 202-222 (GLAI…SYLV), 226-246 (VFAD…CVFC), 248-268 (ALVG…AVFM), 271-291 (TGSL…KHEL), 292-312 (VLCI…IQVF), and 340-360 (KIVI…LATL).

The protein belongs to the glycosyltransferase 4 family. MraY subfamily. Mg(2+) is required as a cofactor.

The protein localises to the cell inner membrane. The enzyme catalyses UDP-N-acetyl-alpha-D-muramoyl-L-alanyl-gamma-D-glutamyl-meso-2,6-diaminopimeloyl-D-alanyl-D-alanine + di-trans,octa-cis-undecaprenyl phosphate = di-trans,octa-cis-undecaprenyl diphospho-N-acetyl-alpha-D-muramoyl-L-alanyl-D-glutamyl-meso-2,6-diaminopimeloyl-D-alanyl-D-alanine + UMP. It participates in cell wall biogenesis; peptidoglycan biosynthesis. Its function is as follows. Catalyzes the initial step of the lipid cycle reactions in the biosynthesis of the cell wall peptidoglycan: transfers peptidoglycan precursor phospho-MurNAc-pentapeptide from UDP-MurNAc-pentapeptide onto the lipid carrier undecaprenyl phosphate, yielding undecaprenyl-pyrophosphoryl-MurNAc-pentapeptide, known as lipid I. The sequence is that of Phospho-N-acetylmuramoyl-pentapeptide-transferase from Gluconacetobacter diazotrophicus (strain ATCC 49037 / DSM 5601 / CCUG 37298 / CIP 103539 / LMG 7603 / PAl5).